The following is a 285-amino-acid chain: Bifunctional protein FolD (285 aa).

NADP(+)-binding positions include 165 to 167 (GRS) and Ser-190.

It belongs to the tetrahydrofolate dehydrogenase/cyclohydrolase family. Homodimer.

The catalysed reaction is (6R)-5,10-methylene-5,6,7,8-tetrahydrofolate + NADP(+) = (6R)-5,10-methenyltetrahydrofolate + NADPH. It carries out the reaction (6R)-5,10-methenyltetrahydrofolate + H2O = (6R)-10-formyltetrahydrofolate + H(+). It participates in one-carbon metabolism; tetrahydrofolate interconversion. Its function is as follows. Catalyzes the oxidation of 5,10-methylenetetrahydrofolate to 5,10-methenyltetrahydrofolate and then the hydrolysis of 5,10-methenyltetrahydrofolate to 10-formyltetrahydrofolate. This Staphylococcus saprophyticus subsp. saprophyticus (strain ATCC 15305 / DSM 20229 / NCIMB 8711 / NCTC 7292 / S-41) protein is Bifunctional protein FolD.